Reading from the N-terminus, the 126-residue chain is uncharacterized protein (126 aa).

Residues 1–28 (MAGEAVSEHTPDSQEVTVTSVVCCLDSV) lie on the Cytoplasmic side of the membrane. The helical transmembrane segment at 29–49 (VEIGHHVVYSVVTPLIVAVLI) threads the bilayer. Topologically, residues 50-75 (DTMAGEAVLEHTSDSQEEIVTTVVCS) are extracellular. A helical membrane pass occupies residues 76–96 (VVPLVCFVVSVVCFVISVVEI). A topological domain (cytoplasmic) is located at residue Gly-97. Residues 98–118 (HHVVYSVVAPLTVTVAVETIA) traverse the membrane as a helical segment. Residues 119-126 (EEMDSVHT) are Extracellular-facing.

It is found in the membrane. This is an uncharacterized protein from Saccharomyces cerevisiae (strain ATCC 204508 / S288c) (Baker's yeast).